Here is a 126-residue protein sequence, read N- to C-terminus: Histone H2B type 1-H (126 aa).

The span at 1-12 shows a compositional bias: low complexity; that stretch reads MPDPAKSAPAPK. A disordered region spans residues 1-36; that stretch reads MPDPAKSAPAPKKGSKKAVTKAQKKDGKKRKRSRKE. An N-acetylproline modification is found at Pro-2. At Lys-6 the chain carries N6-(2-hydroxyisobutyryl)lysine; alternate. At Lys-6 the chain carries N6-(beta-hydroxybutyryl)lysine; alternate. Lys-6 is modified (N6-acetyllysine; alternate). Lys-6 is subject to N6-butyryllysine; alternate. Lys-6 carries the post-translational modification N6-crotonyllysine; alternate. At Lys-6 the chain carries N6-lactoyllysine; alternate. Lys-6 participates in a covalent cross-link: Glycyl lysine isopeptide (Lys-Gly) (interchain with G-Cter in SUMO2); alternate. Ser-7 carries the post-translational modification ADP-ribosylserine. Lys-12 carries the post-translational modification N6-(beta-hydroxybutyryl)lysine; alternate. An N6-acetyllysine; alternate mark is found at Lys-12 and Lys-13. Lys-12 and Lys-13 each carry N6-crotonyllysine; alternate. An N6-lactoyllysine; alternate modification is found at Lys-12. Lys-13 carries the N6-(2-hydroxyisobutyryl)lysine; alternate modification. The residue at position 15 (Ser-15) is a Phosphoserine; by STK4/MST1. Residues Lys-16, Lys-17, Lys-21, and Lys-24 each carry the N6-acetyllysine; alternate modification. N6-crotonyllysine; alternate is present on residues Lys-16, Lys-17, Lys-21, and Lys-24. 4 positions are modified to N6-lactoyllysine; alternate: Lys-16, Lys-17, Lys-21, and Lys-24. Lys-17 and Lys-21 each carry N6-(beta-hydroxybutyryl)lysine; alternate. Residue Lys-17 is modified to N6-glutaryllysine; alternate. Residues Lys-21 and Lys-24 each carry the N6-(2-hydroxyisobutyryl)lysine; alternate modification. An N6-butyryllysine; alternate modification is found at Lys-21. A Glycyl lysine isopeptide (Lys-Gly) (interchain with G-Cter in SUMO2); alternate cross-link involves residue Lys-21. Residue Lys-25 is modified to N6-(2-hydroxyisobutyryl)lysine. Lys-35 bears the N6-(2-hydroxyisobutyryl)lysine; alternate mark. At Lys-35 the chain carries N6-(beta-hydroxybutyryl)lysine; alternate. The residue at position 35 (Lys-35) is an N6-crotonyllysine; alternate. Lys-35 is subject to N6-glutaryllysine; alternate. N6-succinyllysine; alternate is present on Lys-35. Residue Lys-35 forms a Glycyl lysine isopeptide (Lys-Gly) (interchain with G-Cter in ubiquitin); alternate linkage. Position 36 is a polyADP-ribosyl glutamic acid (Glu-36). The residue at position 37 (Ser-37) is a Phosphoserine; by AMPK. 3 positions are modified to N6-(2-hydroxyisobutyryl)lysine; alternate: Lys-44, Lys-47, and Lys-58. Position 44 is an N6-lactoyllysine; alternate (Lys-44). An N6-glutaryllysine; alternate mark is found at Lys-44 and Lys-47. Position 47 is an N6-methyllysine; alternate (Lys-47). Lys-58 carries the N6,N6-dimethyllysine; alternate modification. Residue Arg-80 is modified to Dimethylated arginine. Lys-86 bears the N6-(2-hydroxyisobutyryl)lysine; alternate mark. Lys-86 is subject to N6-(beta-hydroxybutyryl)lysine; alternate. Lys-86 carries the post-translational modification N6-acetyllysine; alternate. Residue Lys-86 is modified to N6-lactoyllysine; alternate. At Lys-86 the chain carries N6,N6,N6-trimethyllysine; alternate. Omega-N-methylarginine is present on residues Arg-87 and Arg-93. N6-(2-hydroxyisobutyryl)lysine; alternate is present on Lys-109. An N6-lactoyllysine; alternate modification is found at Lys-109. Lys-109 carries the N6-glutaryllysine; alternate modification. An N6-methyllysine; alternate modification is found at Lys-109. An O-linked (GlcNAc) serine glycan is attached at Ser-113. Phosphothreonine is present on Thr-116. N6-(2-hydroxyisobutyryl)lysine; alternate is present on residues Lys-117 and Lys-121. N6-(beta-hydroxybutyryl)lysine; alternate occurs at positions 117 and 121. N6-lactoyllysine; alternate occurs at positions 117 and 121. Lys-117 and Lys-121 each carry N6-glutaryllysine; alternate. N6-succinyllysine; alternate occurs at positions 117 and 121. Lys-117 carries the N6-malonyllysine; alternate modification. Lys-117 is modified (N6-methylated lysine; alternate). Residue Lys-121 forms a Glycyl lysine isopeptide (Lys-Gly) (interchain with G-Cter in ubiquitin); alternate linkage.

The protein belongs to the histone H2B family. The nucleosome is a histone octamer containing two molecules each of H2A, H2B, H3 and H4 assembled in one H3-H4 heterotetramer and two H2A-H2B heterodimers. The octamer wraps approximately 147 bp of DNA. Found in a complex with PPAR9; DTX3L AND STAT1; the interaction is likely to induce DTX3L-mediated ubiquitination of H2BC9/H2BJ. Monoubiquitination at Lys-35 (H2BK34Ub) by the MSL1/MSL2 dimer is required for histone H3 'Lys-4' (H3K4me) and 'Lys-79' (H3K79me) methylation and transcription activation at specific gene loci, such as HOXA9 and MEIS1 loci. Similarly, monoubiquitination at Lys-121 (H2BK120Ub) by the RNF20/40 complex gives a specific tag for epigenetic transcriptional activation and is also prerequisite for histone H3 'Lys-4' and 'Lys-79' methylation. It also functions cooperatively with the FACT dimer to stimulate elongation by RNA polymerase II. H2BK120Ub also acts as a regulator of mRNA splicing: deubiquitination by USP49 is required for efficient cotranscriptional splicing of a large set of exons. Monoubiquitinated by DTX3L upon encephalomyocarditis virus (EMCV)-mediated infection. Post-translationally, phosphorylation at Ser-37 (H2BS36ph) by AMPK in response to stress promotes transcription. Phosphorylated on Ser-15 (H2BS14ph) by STK4/MST1 during apoptosis; which facilitates apoptotic chromatin condensation. Also phosphorylated on Ser-15 in response to DNA double strand breaks (DSBs), and in correlation with somatic hypermutation and immunoglobulin class-switch recombination. In terms of processing, glcNAcylation at Ser-113 promotes monoubiquitination of Lys-121. It fluctuates in response to extracellular glucose, and associates with transcribed genes. ADP-ribosylated by PARP1 or PARP2 on Ser-7 (H2BS6ADPr) in response to DNA damage. H2BS6ADPr promotes recruitment of CHD1L. Poly ADP-ribosylation on Glu-36 (H2BE35ADPr) by PARP1 regulates adipogenesis: it inhibits phosphorylation at Ser-37 (H2BS36ph), thereby blocking expression of pro-adipogenetic genes. Post-translationally, crotonylation (Kcr) is specifically present in male germ cells and marks testis-specific genes in post-meiotic cells, including X-linked genes that escape sex chromosome inactivation in haploid cells. Crotonylation marks active promoters and enhancers and confers resistance to transcriptional repressors. It is also associated with post-meiotically activated genes on autosomes. In terms of processing, lactylated in macrophages by EP300/P300 by using lactoyl-CoA directly derived from endogenous or exogenous lactate, leading to stimulates gene transcription.

The protein resides in the nucleus. The protein localises to the chromosome. In terms of biological role, core component of nucleosome. Nucleosomes wrap and compact DNA into chromatin, limiting DNA accessibility to the cellular machineries which require DNA as a template. Histones thereby play a central role in transcription regulation, DNA repair, DNA replication and chromosomal stability. DNA accessibility is regulated via a complex set of post-translational modifications of histones, also called histone code, and nucleosome remodeling. This is Histone H2B type 1-H from Homo sapiens (Human).